The chain runs to 167 residues: Crossover junction endodeoxyribonuclease RuvC (167 aa).

Catalysis depends on residues D7, E67, and D140. Residues D7, E67, and D140 each coordinate Mg(2+).

This sequence belongs to the RuvC family. In terms of assembly, homodimer which binds Holliday junction (HJ) DNA. The HJ becomes 2-fold symmetrical on binding to RuvC with unstacked arms; it has a different conformation from HJ DNA in complex with RuvA. In the full resolvosome a probable DNA-RuvA(4)-RuvB(12)-RuvC(2) complex forms which resolves the HJ. Mg(2+) serves as cofactor.

It localises to the cytoplasm. It catalyses the reaction Endonucleolytic cleavage at a junction such as a reciprocal single-stranded crossover between two homologous DNA duplexes (Holliday junction).. Its function is as follows. The RuvA-RuvB-RuvC complex processes Holliday junction (HJ) DNA during genetic recombination and DNA repair. Endonuclease that resolves HJ intermediates. Cleaves cruciform DNA by making single-stranded nicks across the HJ at symmetrical positions within the homologous arms, yielding a 5'-phosphate and a 3'-hydroxyl group; requires a central core of homology in the junction. The consensus cleavage sequence is 5'-(A/T)TT(C/G)-3'. Cleavage occurs on the 3'-side of the TT dinucleotide at the point of strand exchange. HJ branch migration catalyzed by RuvA-RuvB allows RuvC to scan DNA until it finds its consensus sequence, where it cleaves and resolves the cruciform DNA. The chain is Crossover junction endodeoxyribonuclease RuvC from Dehalococcoides mccartyi (strain ATCC BAA-2100 / JCM 16839 / KCTC 5957 / BAV1).